The chain runs to 365 residues: Peptide chain release factor 2 (365 aa).

N5-methylglutamine is present on Gln251.

Belongs to the prokaryotic/mitochondrial release factor family. In terms of processing, methylated by PrmC. Methylation increases the termination efficiency of RF2.

It localises to the cytoplasm. In terms of biological role, peptide chain release factor 2 directs the termination of translation in response to the peptide chain termination codons UGA and UAA. In Aliarcobacter butzleri (strain RM4018) (Arcobacter butzleri), this protein is Peptide chain release factor 2.